We begin with the raw amino-acid sequence, 455 residues long: UDP-glycosyltransferase 79B2 (455 aa).

Residues Ser-266, 325-327 (VQQ), 342-350 (HCGFGSMWE), and 364-367 (LGDQ) contribute to the UDP-alpha-D-glucose site.

This sequence belongs to the UDP-glycosyltransferase family.

In Arabidopsis thaliana (Mouse-ear cress), this protein is UDP-glycosyltransferase 79B2 (UGT79B2).